Reading from the N-terminus, the 901-residue chain is Protein translocase subunit SecA (901 aa).

Residues Q89, G107–T111, and D502 each bind ATP. Positions 884, 886, 895, and 896 each coordinate Zn(2+).

It belongs to the SecA family. Monomer and homodimer. Part of the essential Sec protein translocation apparatus which comprises SecA, SecYEG and auxiliary proteins SecDF-YajC and YidC. The cofactor is Zn(2+).

The protein localises to the cell inner membrane. It is found in the cytoplasm. The catalysed reaction is ATP + H2O + cellular proteinSide 1 = ADP + phosphate + cellular proteinSide 2.. Functionally, part of the Sec protein translocase complex. Interacts with the SecYEG preprotein conducting channel. Has a central role in coupling the hydrolysis of ATP to the transfer of proteins into and across the cell membrane, serving both as a receptor for the preprotein-SecB complex and as an ATP-driven molecular motor driving the stepwise translocation of polypeptide chains across the membrane. This chain is Protein translocase subunit SecA, found in Sinorhizobium fredii (strain NBRC 101917 / NGR234).